A 153-amino-acid polypeptide reads, in one-letter code: Ribosome maturation factor RimP (153 aa).

It belongs to the RimP family.

It localises to the cytoplasm. Functionally, required for maturation of 30S ribosomal subunits. This chain is Ribosome maturation factor RimP, found in Clostridium botulinum (strain Kyoto / Type A2).